A 521-amino-acid polypeptide reads, in one-letter code: Cytochrome P450 1A1 (521 aa).

Phe-229 is a binding site for substrate. Cys-463 contacts heme.

It belongs to the cytochrome P450 family. Heme is required as a cofactor.

Its subcellular location is the endoplasmic reticulum membrane. The protein localises to the microsome membrane. The catalysed reaction is an organic molecule + reduced [NADPH--hemoprotein reductase] + O2 = an alcohol + oxidized [NADPH--hemoprotein reductase] + H2O + H(+). Functionally, cytochromes P450 are a group of heme-thiolate monooxygenases. They oxidize a variety of structurally unrelated compounds, including steroids, fatty acids, and xenobiotics. The polypeptide is Cytochrome P450 1A1 (cyp1a1) (Pleuronectes platessa (European plaice)).